A 233-amino-acid chain; its full sequence is Orotidine 5'-phosphate decarboxylase (233 aa).

Substrate-binding positions include aspartate 12, lysine 34, 61–70, threonine 116, arginine 181, glutamine 190, glycine 210, and arginine 211; that span reads DWKLHDIGAT. The Proton donor role is filled by lysine 63.

The protein belongs to the OMP decarboxylase family. Type 1 subfamily. Homodimer.

It carries out the reaction orotidine 5'-phosphate + H(+) = UMP + CO2. Its pathway is pyrimidine metabolism; UMP biosynthesis via de novo pathway; UMP from orotate: step 2/2. Functionally, catalyzes the decarboxylation of orotidine 5'-monophosphate (OMP) to uridine 5'-monophosphate (UMP). The polypeptide is Orotidine 5'-phosphate decarboxylase (Caulobacter vibrioides (strain ATCC 19089 / CIP 103742 / CB 15) (Caulobacter crescentus)).